A 72-amino-acid polypeptide reads, in one-letter code: DNA-directed RNA polymerase subunit omega (72 aa).

It belongs to the RNA polymerase subunit omega family. The RNAP catalytic core consists of 2 alpha, 1 beta, 1 beta' and 1 omega subunit. When a sigma factor is associated with the core the holoenzyme is formed, which can initiate transcription.

The enzyme catalyses RNA(n) + a ribonucleoside 5'-triphosphate = RNA(n+1) + diphosphate. Promotes RNA polymerase assembly. Latches the N- and C-terminal regions of the beta' subunit thereby facilitating its interaction with the beta and alpha subunits. This chain is DNA-directed RNA polymerase subunit omega, found in Laribacter hongkongensis (strain HLHK9).